Here is a 397-residue protein sequence, read N- to C-terminus: Dual specificity mitogen-activated protein kinase kinase 2 (397 aa).

Residues 1-21 form a disordered region; the sequence is MAPKRRPVPLIIAPTGEGQST. The Protein kinase domain occupies 69–366; sequence FDPICELGAG…LKMLMGHTFI (298 aa). Residues 75 to 83 and Lys-98 each bind ATP; that span reads LGAGNGGVV. Catalysis depends on Asp-191, which acts as the Proton acceptor. Phosphoserine; by RAF is present on residues Ser-219 and Ser-223. The disordered stretch occupies residues 284-306; the sequence is GGAEGHSMSPRQRPPGRPVSGHG.

The protein belongs to the protein kinase superfamily. STE Ser/Thr protein kinase family. MAP kinase kinase subfamily. Post-translationally, phosphorylation on Ser/Thr by MAP kinase kinase kinases (RAF) positively regulates the kinase activity.

It catalyses the reaction L-seryl-[protein] + ATP = O-phospho-L-seryl-[protein] + ADP + H(+). It carries out the reaction L-threonyl-[protein] + ATP = O-phospho-L-threonyl-[protein] + ADP + H(+). The catalysed reaction is L-tyrosyl-[protein] + ATP = O-phospho-L-tyrosyl-[protein] + ADP + H(+). In terms of biological role, catalyzes the concomitant phosphorylation of a threonine and a tyrosine residue in a Thr-Glu-Tyr sequence located in MAP kinases. The polypeptide is Dual specificity mitogen-activated protein kinase kinase 2 (map2k2) (Cyprinus carpio (Common carp)).